A 294-amino-acid chain; its full sequence is Cell division protein FtsQ (294 aa).

The Cytoplasmic portion of the chain corresponds to 1–26 (MARGPNRRRVDRVPGERRRRLARAMA). A helical transmembrane segment spans residues 27-49 (LALPSILALAALGGAATLGWRVG). Topologically, residues 50–294 (WKSDLLRVRE…GPQGRSSSLR (245 aa)) are periplasmic. The POTRA domain occupies 55 to 123 (LRVREIRFEG…PALEVQLAER (69 aa)). The interval 266-294 (AGRRGEPDGRSSYAAGGGGGPQGRSSSLR) is disordered.

Belongs to the FtsQ/DivIB family. FtsQ subfamily.

Its subcellular location is the cell inner membrane. Functionally, essential cell division protein. The polypeptide is Cell division protein FtsQ (Anaeromyxobacter sp. (strain K)).